The chain runs to 354 residues: Probable dual-specificity RNA methyltransferase RlmN (354 aa).

Glu-94 serves as the catalytic Proton acceptor. Residues Gly-103–Arg-332 form the Radical SAM core domain. Cysteines 110 and 343 form a disulfide. [4Fe-4S] cluster contacts are provided by Cys-117, Cys-121, and Cys-124. S-adenosyl-L-methionine contacts are provided by residues Gly-169–Glu-170, Ser-201, Ser-224–His-226, and Asn-300. Residue Cys-343 is the S-methylcysteine intermediate of the active site.

Belongs to the radical SAM superfamily. RlmN family. [4Fe-4S] cluster serves as cofactor.

Its subcellular location is the cytoplasm. It catalyses the reaction adenosine(2503) in 23S rRNA + 2 reduced [2Fe-2S]-[ferredoxin] + 2 S-adenosyl-L-methionine = 2-methyladenosine(2503) in 23S rRNA + 5'-deoxyadenosine + L-methionine + 2 oxidized [2Fe-2S]-[ferredoxin] + S-adenosyl-L-homocysteine. The enzyme catalyses adenosine(37) in tRNA + 2 reduced [2Fe-2S]-[ferredoxin] + 2 S-adenosyl-L-methionine = 2-methyladenosine(37) in tRNA + 5'-deoxyadenosine + L-methionine + 2 oxidized [2Fe-2S]-[ferredoxin] + S-adenosyl-L-homocysteine. In terms of biological role, specifically methylates position 2 of adenine 2503 in 23S rRNA and position 2 of adenine 37 in tRNAs. This chain is Probable dual-specificity RNA methyltransferase RlmN, found in Moorella thermoacetica (strain ATCC 39073 / JCM 9320).